We begin with the raw amino-acid sequence, 391 residues long: Phosphoglycerate kinase (391 aa).

Residues 21-23, arginine 36, 59-62, arginine 113, and arginine 146 contribute to the substrate site; these read DLN and HLGR. Residues lysine 197, glutamate 319, and 345 to 348 each bind ATP; that span reads GGDT.

Belongs to the phosphoglycerate kinase family. In terms of assembly, monomer.

The protein resides in the cytoplasm. It catalyses the reaction (2R)-3-phosphoglycerate + ATP = (2R)-3-phospho-glyceroyl phosphate + ADP. It functions in the pathway carbohydrate degradation; glycolysis; pyruvate from D-glyceraldehyde 3-phosphate: step 2/5. The sequence is that of Phosphoglycerate kinase from Xanthomonas euvesicatoria pv. vesicatoria (strain 85-10) (Xanthomonas campestris pv. vesicatoria).